Reading from the N-terminus, the 397-residue chain is Growth-regulating factor 5 (397 aa).

The 36-residue stretch at 16–51 folds into the QLQ domain; that stretch reads PFTPTQWEELEHQALIYKYMVSGVPVPPELIFSIRR. 2 short sequence motifs (bipartite nuclear localization signal) span residues 78–96 and 114–121; these read RKPD…KKWR and RGRNRARK. Residues 81-125 enclose the WRC domain; that stretch reads DPEPGRCRRTDGKKWRCSREAYPDSKYCEKHMHRGRNRARKSLDQ. Disordered regions lie at residues 108 to 172, 197 to 217, 288 to 320, and 340 to 397; these read CEKH…SMDA, LDYP…HHAS, PYHH…DHDH, and VLAN…DTGS. The span at 111 to 120 shows a compositional bias: basic residues; that stretch reads HMHRGRNRAR. Over residues 128–172 the composition is skewed to low complexity; it reads TTTTPLTSPSLSFTNNNNPSPTLSSSSSSNSSSTTYSASSSSMDA. Over residues 288–298 the composition is skewed to basic and acidic residues; sequence PYHHCSTDHNK.

It belongs to the GRF family. As to quaternary structure, interacts with GIF1. In terms of tissue distribution, strongly expressed in actively growing and developing tissues, such as roots, upper stems, and shoot tips containing the shoot apical meristem (SAM) and flower buds. Also expressed in mature flowers, but weakly expressed in mature stems and leaves.

Its subcellular location is the nucleus. Functionally, transcription activator that plays a role in the regulation of cell expansion in leaf and cotyledons tissues. Acts together with GIF1 for the development of appropriate leaf size and shape through the promotion and/or maintenance of cell proliferation activity in leaf primordia. The sequence is that of Growth-regulating factor 5 (GRF5) from Arabidopsis thaliana (Mouse-ear cress).